The primary structure comprises 577 residues: Aspartate--tRNA ligase (577 aa).

Residue glutamate 171 coordinates L-aspartate. Residues 195–198 (QLFK) form an aspartate region. Arginine 217 contributes to the L-aspartate binding site. ATP is bound by residues 217-219 (RDE) and glutamine 226. Residue histidine 437 participates in L-aspartate binding. Glutamate 472 serves as a coordination point for ATP. An L-aspartate-binding site is contributed by arginine 479. 524–527 (GFDR) is a binding site for ATP.

This sequence belongs to the class-II aminoacyl-tRNA synthetase family. Type 1 subfamily. In terms of assembly, homodimer.

It localises to the cytoplasm. The catalysed reaction is tRNA(Asp) + L-aspartate + ATP = L-aspartyl-tRNA(Asp) + AMP + diphosphate. Its function is as follows. Catalyzes the attachment of L-aspartate to tRNA(Asp) in a two-step reaction: L-aspartate is first activated by ATP to form Asp-AMP and then transferred to the acceptor end of tRNA(Asp). This chain is Aspartate--tRNA ligase, found in Deinococcus geothermalis (strain DSM 11300 / CIP 105573 / AG-3a).